The following is a 331-amino-acid chain: Retinol dehydrogenase 13 (331 aa).

Ser2 carries the N-acetylserine modification. 45-51 (GANTGIG) is an NADP(+) binding site. Ser174 lines the substrate pocket. The active-site Proton acceptor is the Tyr200. Phosphoserine is present on Ser323.

The protein belongs to the short-chain dehydrogenases/reductases (SDR) family. In terms of tissue distribution, widely expressed. In the retina, detected in the inner segment of the photoreceptor cells. Weak signals are observed in a small population of inner nuclear neurons and the inner plexiform layer.

It is found in the mitochondrion inner membrane. The enzyme catalyses all-trans-retinol + NADP(+) = all-trans-retinal + NADPH + H(+). It functions in the pathway cofactor metabolism; retinol metabolism. In terms of biological role, retinol dehydrogenase with a clear preference for NADP. Oxidizes all-trans-retinol, but seems to reduce all-trans-retinal with much higher efficiency. Has no activity toward steroids. The sequence is that of Retinol dehydrogenase 13 (RDH13) from Homo sapiens (Human).